The primary structure comprises 183 residues: tRNA-splicing endonuclease (183 aa).

Catalysis depends on residues Y120, H128, and K159.

This sequence belongs to the tRNA-intron endonuclease family. Archaeal short subfamily. In terms of assembly, homotetramer; although the tetramer contains four active sites, only two participate in the cleavage. Therefore, it should be considered as a dimer of dimers.

The catalysed reaction is pretRNA = a 3'-half-tRNA molecule with a 5'-OH end + a 5'-half-tRNA molecule with a 2',3'-cyclic phosphate end + an intron with a 2',3'-cyclic phosphate and a 5'-hydroxyl terminus.. Endonuclease that removes tRNA introns. Cleaves pre-tRNA at the 5'- and 3'-splice sites to release the intron. The products are an intron and two tRNA half-molecules bearing 2',3' cyclic phosphate and 5'-OH termini. Recognizes a pseudosymmetric substrate in which 2 bulged loops of 3 bases are separated by a stem of 4 bp. The protein is tRNA-splicing endonuclease of Pyrobaculum aerophilum (strain ATCC 51768 / DSM 7523 / JCM 9630 / CIP 104966 / NBRC 100827 / IM2).